A 917-amino-acid polypeptide reads, in one-letter code: DNA repair endonuclease XPF (917 aa).

A helicase-like region spans residues 1 to 457 (MEPGLSGERR…EVWVNVRKGD (457 aa)). Leucine-zipper stretches follow at residues 233–254 (LNACLKELKCHNPSLEVEDLSL) and 270–298 (LDPLWHQLGAKTKSLVQDLKILRTLLQYL). Lysine 289 bears the N6-acetyllysine mark. Residues 454-479 (RKGDGPKRTTKSDKRPKAAPNKERAS) are compositionally biased toward basic and acidic residues. 2 disordered regions span residues 454–524 (RKGD…SSPE) and 643–681 (VPEEREGRDETNLDLARGSAALDAPTDTRKAGGQEQNGT). The Nuclear localization signal motif lies at 487-492 (KRKKQE). Residues 507-516 (EDKALEEDLC) are compositionally biased toward basic and acidic residues. At serine 522 the chain carries Phosphoserine. Residues 643–653 (VPEEREGRDET) are compositionally biased toward basic and acidic residues. Residues 659 to 814 (RGSAALDAPT…PSPHATAELF (156 aa)) form a nuclease region. The ERCC4 domain maps to 684–764 (SIVVDMREFR…RPVLLIEFDP (81 aa)). Serine 765 carries the phosphoserine modification. The tract at residues 838–906 (TLPESDRYNP…QLHDFLHTAY (69 aa)) is hhH2, dimerization with ERCC1. Lysine 912 carries the post-translational modification N6-acetyllysine.

This sequence belongs to the XPF family. In terms of assembly, heterodimer composed of ERCC1 and ERCC4/XPF. Interacts with SLX4/BTBD12; this interaction is direct and links the ERCC1-ERCC4/XPF complex to SLX4, which may coordinate the action of the structure-specific endonuclease during DNA repair. Mg(2+) serves as cofactor. Acetylation at Lys-912 by KAT5 promotes interaction with ERCC1 by disrupting a salt bridge between Asp-908 and Lys-912, thereby exposing a second binding site for ERCC1. Deacetylated by SIRT1.

The protein resides in the nucleus. The protein localises to the chromosome. In terms of biological role, catalytic component of a structure-specific DNA repair endonuclease responsible for the 5-prime incision during DNA repair, and which is essential for nucleotide excision repair (NER) and interstrand cross-link (ICL) repair. This is DNA repair endonuclease XPF from Mus musculus (Mouse).